Reading from the N-terminus, the 108-residue chain is UPF0145 protein Tmel_1129 (108 aa).

It belongs to the UPF0145 family.

In Thermosipho melanesiensis (strain DSM 12029 / CIP 104789 / BI429), this protein is UPF0145 protein Tmel_1129.